Consider the following 509-residue polypeptide: Ribonuclease Y (509 aa).

Residues M1–A21 traverse the membrane as a helical segment. The 61-residue stretch at T199 to L259 folds into the KH domain. Positions V325 to A418 constitute an HD domain.

The protein belongs to the RNase Y family.

Its subcellular location is the cell membrane. Endoribonuclease that initiates mRNA decay. This Pseudothermotoga lettingae (strain ATCC BAA-301 / DSM 14385 / NBRC 107922 / TMO) (Thermotoga lettingae) protein is Ribonuclease Y.